Here is a 42-residue protein sequence, read N- to C-terminus: Conotoxin Au11.6 (42 aa).

4 disulfides stabilise this stretch: Cys-6/Cys-20, Cys-13/Cys-25, Cys-19/Cys-30, and Cys-24/Cys-37.

It belongs to the conotoxin I1 superfamily. Expressed by the venom duct.

The protein resides in the secreted. This chain is Conotoxin Au11.6, found in Conus aulicus (Princely cone).